Here is a 220-residue protein sequence, read N- to C-terminus: GTP cyclohydrolase 1 (220 aa).

Zn(2+)-binding residues include Cys110, His113, and Cys181.

Belongs to the GTP cyclohydrolase I family. As to quaternary structure, toroid-shaped homodecamer, composed of two pentamers of five dimers.

It catalyses the reaction GTP + H2O = 7,8-dihydroneopterin 3'-triphosphate + formate + H(+). Its pathway is cofactor biosynthesis; 7,8-dihydroneopterin triphosphate biosynthesis; 7,8-dihydroneopterin triphosphate from GTP: step 1/1. The chain is GTP cyclohydrolase 1 from Baumannia cicadellinicola subsp. Homalodisca coagulata.